Consider the following 60-residue polypeptide: UPF0434 protein YcaR (60 aa).

This sequence belongs to the UPF0434 family.

This chain is UPF0434 protein YcaR, found in Escherichia fergusonii (strain ATCC 35469 / DSM 13698 / CCUG 18766 / IAM 14443 / JCM 21226 / LMG 7866 / NBRC 102419 / NCTC 12128 / CDC 0568-73).